Reading from the N-terminus, the 538-residue chain is Putative cysteine ligase BshC (538 aa).

The stretch at 421–485 (VEEKFQEAKK…LERRHEVELN (65 aa)) forms a coiled coil.

This sequence belongs to the BshC family.

Its function is as follows. Involved in bacillithiol (BSH) biosynthesis. May catalyze the last step of the pathway, the addition of cysteine to glucosamine malate (GlcN-Mal) to generate BSH. The sequence is that of Putative cysteine ligase BshC from Bacillus cytotoxicus (strain DSM 22905 / CIP 110041 / 391-98 / NVH 391-98).